The chain runs to 720 residues: MGKNYKSLDSVVASDFIALGITSEVAETLHGRLAEIVCNYGAATPQTWINIANHILSPDLPFSLHQMLFYGCYKDFGPAPPAWIPDPEKVKSTNLGALLEKRGKEFLGVKYKDPISSFSHFQEFSVRNPEVYWRTVLMDEMKISFSKDPECILRRDDINNPGGSEWLPGGYLNSAKNCLNVNSNKKLNDTMIVWRDEGNDDLPLNKLTLDQLRKRVWLVGYALEEMGLEKGCAIAIDMPMHVDAVVIYLAIVLAGYVVVSIADSFSAPEISTRLRLSKAKAIFTQDHIIRGKKRIPLYSRVVEAKSPMAIVIPCSGSNIGAELRDGDISWDYFLERAKEFKNCEFTAREQPVDAYTNILFSSGTTGEPKAIPWTQATPLKAAADGWSHLDIRKGDVIVWPTNLGWMMGPWLVYASLLNGASIALYNGSPLVSGFAKFVQDAKVTMLGVVPSIVRSWKSTNCVSGYDWSTIRCFSSSGEASNVDEYLWLMGRANYKPVIEMCGGTEIGGAFSAGSFLQAQSLSSFSSQCMGCTLYILDKNGYPMPKNKPGIGELALGPVMFGASKTLLNGNHHDVYFKGMPTLNGEVLRRHGDIFELTSNGYYHAHGRADDTMNIGGIKISSIEIERVCNEVDDRVFETTAIGVPPLGGGPEQLVIFFVLKDSNDTTIDLNQLRLSFNLGLQKKLNPLFKVTRVVPLSSLPRTATNKIMRRVLRQQFSHFE.

The helical transmembrane segment at 242 to 262 (VDAVVIYLAIVLAGYVVVSIA) threads the bilayer. 290 to 293 (RGKK) contributes to the CoA binding site. ATP is bound by residues 477–479 (GEA), 499–504 (EMCGGT), Glu-585, and Arg-607. Gly-615 is a binding site for CoA. Lys-618 serves as a coordination point for ATP. Position 681 (Gln-681) interacts with CoA.

The protein belongs to the ATP-dependent AMP-binding enzyme family. Mg(2+) is required as a cofactor. As to expression, accumulates in glandular trichomes, especially in female flowers. Present at low levels in roots, stems and leaves.

It localises to the cytoplasm. The protein resides in the cytosol. Its subcellular location is the membrane. The catalysed reaction is hexanoate + ATP + CoA = hexanoyl-CoA + AMP + diphosphate. It participates in secondary metabolite biosynthesis; terpenoid biosynthesis. Inhibitied by high CoA concentrations. Involved in the biosynthesis of cannabinoids-related terpenophenolic natural products, which have pharmacological activity. Acyl-activating enzyme that catalyzes the conversion of hexanoic acid to hexanoyl-CoA, precursor of the cannabinoid pathway. Can also activate other fatty acids including heptanoate, octanoate and nonanoate. This is Hexanoyl-CoA synthase from Cannabis sativa (Hemp).